We begin with the raw amino-acid sequence, 264 residues long: Glutamate racemase (264 aa).

Residues 10-11 (DS) and 42-43 (YG) contribute to the substrate site. The active-site Proton donor/acceptor is the Cys-73. 74 to 75 (NT) provides a ligand contact to substrate. Cys-183 functions as the Proton donor/acceptor in the catalytic mechanism. 184 to 185 (TH) provides a ligand contact to substrate.

Belongs to the aspartate/glutamate racemases family.

It carries out the reaction L-glutamate = D-glutamate. Its pathway is cell wall biogenesis; peptidoglycan biosynthesis. Its function is as follows. Provides the (R)-glutamate required for cell wall biosynthesis. This Streptococcus suis (strain 98HAH33) protein is Glutamate racemase.